The chain runs to 728 residues: Methylmalonyl-CoA mutase large subunit (728 aa).

7 residues coordinate (R)-methylmalonyl-CoA: Tyr75, Met78, Arg82, Thr85, Arg87, Tyr89, and Ser114. Cob(II)alamin-binding residues include Phe117 and Ala139. (R)-methylmalonyl-CoA is bound by residues Thr195 and Gln197. The cob(II)alamin site is built by Val206 and Arg207. Residues Arg207, His244, Arg283, and Ser285 each coordinate (R)-methylmalonyl-CoA. Residues Gly333, Glu370, Ala373, Gly609, His610, Asp611, Arg612, Ser655, Leu657, Gly686, and Thr709 each contribute to the cob(II)alamin site. A B12-binding domain is found at 597–728 (RPRILLAKMG…VKKLRASLDA (132 aa)).

It belongs to the methylmalonyl-CoA mutase family. Heterodimer of an alpha and a beta chain. Adenosylcob(III)alamin is required as a cofactor.

It catalyses the reaction (R)-methylmalonyl-CoA = succinyl-CoA. Its function is as follows. Catalyzes the reversible conversion of succinyl-CoA to (R)-methylmalonyl-CoA through a radical mechanism. Is involved in the fermentation of pyruvate to propanoate that occurs in Propionibacteria. The polypeptide is Methylmalonyl-CoA mutase large subunit (mutB) (Propionibacterium freudenreichii subsp. shermanii).